Reading from the N-terminus, the 126-residue chain is Small ribosomal subunit protein uS13 (126 aa).

Positions 94–126 (RGLPVHGQRTSTNARTRKGPRRAIAGKKKPGKK) are disordered. A compositionally biased stretch (basic residues) spans 108-126 (RTRKGPRRAIAGKKKPGKK).

The protein belongs to the universal ribosomal protein uS13 family. In terms of assembly, part of the 30S ribosomal subunit. Forms a loose heterodimer with protein S19. Forms two bridges to the 50S subunit in the 70S ribosome.

Functionally, located at the top of the head of the 30S subunit, it contacts several helices of the 16S rRNA. In the 70S ribosome it contacts the 23S rRNA (bridge B1a) and protein L5 of the 50S subunit (bridge B1b), connecting the 2 subunits; these bridges are implicated in subunit movement. Contacts the tRNAs in the A and P-sites. This is Small ribosomal subunit protein uS13 from Streptomyces griseus subsp. griseus (strain JCM 4626 / CBS 651.72 / NBRC 13350 / KCC S-0626 / ISP 5235).